Consider the following 2567-residue polypeptide: Unconventional myosin-XVIIIb (2567 aa).

The interval 41 to 508 (LVRGTEKEAK…SRDSDQAPED (468 aa)) is disordered. Residues 44-54 (GTEKEAKEARQ) are compositionally biased toward basic and acidic residues. Low complexity predominate over residues 71 to 104 (SISQPNSKSSSGTRSGSQQISQDDQSSSPGSSDI). 2 stretches are compositionally biased toward basic and acidic residues: residues 105 to 116 (LGKESEGSRSPD) and 160 to 176 (LDPD…HDAP). A compositionally biased stretch (polar residues) spans 196–206 (SRTPCGSQAST). Composition is skewed to basic and acidic residues over residues 251–265 (TELK…DRQG), 278–287 (RPGKAEKEGA), and 326–349 (SKWD…EKTG). The segment covering 350–362 (EPQTQMEKTSQVQ) has biased composition (polar residues). Composition is skewed to basic and acidic residues over residues 367-377 (DDLRMGEKAGE), 410-420 (SQTEKGCEAPK), 471-485 (LEKD…KENQ), and 492-508 (EEGK…APED). A Myosin motor domain is found at 571–1333 (DQVEDLASLI…VISRLEKQRE (763 aa)). Residue 660-667 (GWSGAGKT) coordinates ATP. The tract at residues 1208–1232 (VESRSGQESPPPPQPGRDKPGAGGP) is disordered. The interval 1213–1240 (GQESPPPPQPGRDKPGAGGPLALDIPAL) is GPA. S1216 is subject to Phosphoserine. In terms of domain architecture, IQ spans 1336–1365 (VSQSIVLFQAACKGFLSRQEFKKLKIRRLA). 3 coiled-coil regions span residues 1396–1783 (SATI…GLIG), 1825–1961 (KTSV…STVD), and 2014–2090 (ESQQ…VASS). Residues 1426-2083 (NELRQNTDLL…IRRIADLQAA (658 aa)) are tail. S1829 carries the phosphoserine modification. The segment covering 2139–2153 (TMRTPSRQSATSSRI) has biased composition (polar residues). Disordered stretches follow at residues 2139–2194 (TMRT…PVSP) and 2217–2249 (STER…PSAA). Residues 2158-2167 (INEEAGDTER) are compositionally biased toward basic and acidic residues. The segment covering 2168–2185 (TQSALALSRARSTNVHSK) has biased composition (polar residues). Phosphoserine is present on S2193. Residues 2227–2238 (PLASRSTNTSPL) show a composition bias toward polar residues. Residues S2296 and S2309 each carry the phosphoserine modification. Residues 2357–2376 (SRPSMGRKLSSPTTPRDMLL) form a disordered region. The residue at position 2377 (S2377) is a Phosphoserine. Disordered stretches follow at residues 2444-2471 (FLPA…SQRS) and 2494-2567 (KSPE…YLQK). Residues 2494–2504 (KSPEPKEDPAH) show a composition bias toward basic and acidic residues. Low complexity predominate over residues 2506–2520 (SDSSSSSGSIVSFKS). Over residues 2537 to 2556 (GGERTSPERREPGTGRKDDD) the composition is skewed to basic and acidic residues.

The protein belongs to the TRAFAC class myosin-kinesin ATPase superfamily. Myosin family. Homodimer. May interact with F actin through the GPA motif (Gly/Pro/Ala-rich). As to expression, selectively expressed in cardiac and skeletal muscles. Weakly expressed in testis, pancreas, placenta, prostate, lung and thymus.

Its subcellular location is the cytoplasm. The protein localises to the nucleus. It is found in the myofibril. The protein resides in the sarcomere. In terms of biological role, may be involved in intracellular trafficking of the muscle cell when in the cytoplasm, whereas entering the nucleus, may be involved in the regulation of muscle specific genes. May play a role in the control of tumor development and progression; restored MYO18B expression in lung cancer cells suppresses anchorage-independent growth. The polypeptide is Unconventional myosin-XVIIIb (MYO18B) (Homo sapiens (Human)).